We begin with the raw amino-acid sequence, 402 residues long: CinA-like protein (402 aa).

This sequence belongs to the CinA family.

The chain is CinA-like protein from Fusobacterium nucleatum subsp. nucleatum (strain ATCC 25586 / DSM 15643 / BCRC 10681 / CIP 101130 / JCM 8532 / KCTC 2640 / LMG 13131 / VPI 4355).